The sequence spans 163 residues: uncharacterized protein (163 aa).

Residues 1-54 are disordered; sequence MGKSARLRRSQTSSPENVLLGKDSSDDPYRSDSETESNSSSGTESNMSSDSTTS. Residues 23 to 33 show a composition bias toward basic and acidic residues; that stretch reads DSSDDPYRSDS. The span at 36–52 shows a compositional bias: low complexity; the sequence is ESNSSSGTESNMSSDST. A coiled-coil region spans residues 69–143; that stretch reads LRTELAEMEM…VEELESSTRE (75 aa).

This is an uncharacterized protein from Arabidopsis thaliana (Mouse-ear cress).